Reading from the N-terminus, the 211-residue chain is Arginine exporter protein ArgO (211 aa).

A run of 6 helical transmembrane segments spans residues 1 to 21, 37 to 57, 68 to 88, 111 to 131, 147 to 167, and 182 to 202; these read MFSY…PLGP, IMIA…GIFG, LLAL…FGAF, IIAT…DTFV, WFAL…AILA, and IINL…ARDG.

The protein belongs to the LysE/ArgO transporter (TC 2.A.75) family.

The protein localises to the cell inner membrane. The enzyme catalyses L-arginine(in) = L-arginine(out). Involved in the export of arginine. Important to control the intracellular level of arginine and the correct balance between arginine and lysine. The sequence is that of Arginine exporter protein ArgO from Escherichia coli O157:H7.